Consider the following 306-residue polypeptide: Non-specific ribonucleoside hydrolase RihC (306 aa).

Histidine 235 is a catalytic residue.

The protein belongs to the IUNH family. RihC subfamily.

In terms of biological role, hydrolyzes both purine and pyrimidine ribonucleosides with a broad-substrate specificity. The polypeptide is Non-specific ribonucleoside hydrolase RihC (Salmonella heidelberg (strain SL476)).